The primary structure comprises 410 residues: Acetate kinase (410 aa).

Residue asparagine 7 coordinates Mg(2+). Position 14 (lysine 14) interacts with ATP. Arginine 88 serves as a coordination point for substrate. Catalysis depends on aspartate 145, which acts as the Proton donor/acceptor. Residues 203-207 (HAGNG), 278-280 (DTR), and 326-330 (GIGEN) contribute to the ATP site. Residue glutamate 379 coordinates Mg(2+).

It belongs to the acetokinase family. As to quaternary structure, homodimer. Mg(2+) is required as a cofactor. Mn(2+) serves as cofactor.

Its subcellular location is the cytoplasm. It carries out the reaction acetate + ATP = acetyl phosphate + ADP. The protein operates within metabolic intermediate biosynthesis; acetyl-CoA biosynthesis; acetyl-CoA from acetate: step 1/2. Functionally, catalyzes the formation of acetyl phosphate from acetate and ATP. Can also catalyze the reverse reaction. This is Acetate kinase from Aster yellows witches'-broom phytoplasma (strain AYWB).